A 402-amino-acid polypeptide reads, in one-letter code: UDP-glucose 6-dehydrogenase (402 aa).

NAD(+)-binding positions include 2–19 (KIAVAGSGYVGLSLGVLL), Val-11, Asp-29, Lys-34, Thr-83, Thr-118, and Glu-145. Substrate-binding positions include 141–145 (EFLRE), Lys-204, Asn-208, 249–253 (YNNPS), and Gly-257. Tyr-259 lines the NAD(+) pocket. Catalysis depends on Cys-260, which acts as the Nucleophile. An NAD(+)-binding site is contributed by Lys-263. Lys-320 lines the substrate pocket. Position 327 (Arg-327) interacts with NAD(+).

This sequence belongs to the UDP-glucose/GDP-mannose dehydrogenase family.

It catalyses the reaction UDP-alpha-D-glucose + 2 NAD(+) + H2O = UDP-alpha-D-glucuronate + 2 NADH + 3 H(+). Its pathway is nucleotide-sugar biosynthesis; UDP-alpha-D-glucuronate biosynthesis; UDP-alpha-D-glucuronate from UDP-alpha-D-glucose: step 1/1. Its function is as follows. Catalyzes the formation of UDP-glucuronic acid which is required for capsular hyaluronic acid synthesis. This Streptococcus pyogenes serotype M18 (strain MGAS8232) protein is UDP-glucose 6-dehydrogenase (hasB).